A 128-amino-acid chain; its full sequence is Protein 2B* (128 aa).

Disordered regions lie at residues 1–27 (PFMF…NPTA) and 92–128 (RDDN…RNSS). The segment covering 18 to 27 (SVINGSNPTA) has biased composition (polar residues). Positions 111–128 (IDGRRDYKPDKSVRRNSS) are enriched in basic and acidic residues.

The protein belongs to the encephalomyocarditis virus protein 2B* family.

The sequence is that of Protein 2B* from Aotus trivirgatus (Three-striped night monkey).